We begin with the raw amino-acid sequence, 541 residues long: Protein yellow (541 aa).

Residues 1 to 21 form the signal peptide; that stretch reads MFQDKGWILVTLITLVTPSWA. Residues Asn-144 and Asn-215 are each glycosylated (N-linked (GlcNAc...) asparagine). Positions 443–463 are disordered; sequence QKPQTSWASSPPPPSRTYLPA.

This sequence belongs to the major royal jelly protein family.

It is found in the secreted. Functionally, controls the pigmentation pattern of the adult cuticle and larval mouth parts. This Drosophila melanogaster (Fruit fly) protein is Protein yellow (y).